The primary structure comprises 334 residues: L-lactate dehydrogenase B chain (334 aa).

Ala2 is modified (N-acetylalanine). Lys7 bears the N6-acetyllysine mark. Ser44 bears the Phosphoserine mark. Residues 53–58 and Arg100 contribute to the NAD(+) site; that span reads DVLEDK. Residue Lys58 is modified to N6-acetyllysine. Position 107 (Arg107) interacts with substrate. N6-acetyllysine is present on Lys119. Asn139 is an NAD(+) binding site. Residues Asn139 and Arg170 each contribute to the substrate site. Catalysis depends on His194, which acts as the Proton acceptor. At Tyr240 the chain carries Phosphotyrosine. Thr249 contributes to the substrate binding site. The residue at position 329 (Lys329) is an N6-acetyllysine.

This sequence belongs to the LDH/MDH superfamily. LDH family. In terms of assembly, homotetramer. Interacts with PTEN upstream reading frame protein MP31; the interaction leads to inhibition of mitochondrial lactate dehydrogenase activity, preventing conversion of lactate to pyruvate in mitochondria.

The protein resides in the cytoplasm. The protein localises to the mitochondrion inner membrane. The catalysed reaction is (S)-lactate + NAD(+) = pyruvate + NADH + H(+). It participates in fermentation; pyruvate fermentation to lactate; (S)-lactate from pyruvate: step 1/1. Functionally, interconverts simultaneously and stereospecifically pyruvate and lactate with concomitant interconversion of NADH and NAD(+). The polypeptide is L-lactate dehydrogenase B chain (LDHB) (Monodelphis domestica (Gray short-tailed opossum)).